The following is a 495-amino-acid chain: Ectonucleoside triphosphate diphosphohydrolase 8 (495 aa).

Residues 1 to 8 (MGLTWKQR) are Cytoplasmic-facing. A helical membrane pass occupies residues 9 to 29 (VFTALLGAAAVSGLTALLLVL). The Extracellular portion of the chain corresponds to 30 to 466 (VGTMNVLLPP…PAQGWAQSFG (437 aa)). Cysteines 78 and 102 form a disulfide. Glu-168 acts as the Proton acceptor in catalysis. An intrachain disulfide couples Cys-246 to Cys-292. Asn-303 and Asn-324 each carry an N-linked (GlcNAc...) asparagine glycan. Cystine bridges form between Cys-328–Cys-334 and Cys-380–Cys-403. The helical transmembrane segment at 467–487 (VWAAGVVFVVLTLAATLGAVA) threads the bilayer. The Cytoplasmic segment spans residues 488 to 495 (VQVFWLQD).

Belongs to the GDA1/CD39 NTPase family. Ca(2+) is required as a cofactor. Requires Mg(2+) as cofactor. In terms of processing, N-glycosylated.

It is found in the cell membrane. The enzyme catalyses a ribonucleoside 5'-triphosphate + 2 H2O = a ribonucleoside 5'-phosphate + 2 phosphate + 2 H(+). Functionally, canalicular ectonucleoside NTPDase responsible for the main hepatic NTPDase activity. Ectonucleoside NTPDases catalyze the hydrolysis of gamma- and beta-phosphate residues of nucleotides, playing a central role in concentration of extracellular nucleotides. Has activity toward ATP, ADP, UTP and UDP, but not toward AMP. This Bos taurus (Bovine) protein is Ectonucleoside triphosphate diphosphohydrolase 8 (ENTPD8).